Consider the following 201-residue polypeptide: Anthranilate synthase component 2 (201 aa).

A Glutamine amidotransferase type-1 domain is found at 1–199 (MLLMIDNYDS…LRQQGGVRGE (199 aa)). Residue 52–54 (GPC) participates in L-glutamine binding. Cys-79 acts as the Nucleophile; for GATase activity in catalysis. Residues Gln-83 and 129 to 130 (SL) each bind L-glutamine. Active-site for GATase activity residues include His-173 and Glu-175.

Heterotetramer consisting of two non-identical subunits: a beta subunit (TrpG) and a large alpha subunit (TrpE).

It catalyses the reaction chorismate + L-glutamine = anthranilate + pyruvate + L-glutamate + H(+). Its pathway is amino-acid biosynthesis; L-tryptophan biosynthesis; L-tryptophan from chorismate: step 1/5. Part of a heterotetrameric complex that catalyzes the two-step biosynthesis of anthranilate, an intermediate in the biosynthesis of L-tryptophan. In the first step, the glutamine-binding beta subunit (TrpG) of anthranilate synthase (AS) provides the glutamine amidotransferase activity which generates ammonia as a substrate that, along with chorismate, is used in the second step, catalyzed by the large alpha subunit of AS (TrpE) to produce anthranilate. In the absence of TrpG, TrpE can synthesize anthranilate directly from chorismate and high concentrations of ammonia. This chain is Anthranilate synthase component 2, found in Pseudomonas aeruginosa (strain ATCC 15692 / DSM 22644 / CIP 104116 / JCM 14847 / LMG 12228 / 1C / PRS 101 / PAO1).